The chain runs to 237 residues: Sensory rhodopsin-2 (237 aa).

Residues 1 to 2 lie on the Extracellular side of the membrane; sequence MA. Residues 3–23 form a helical membrane-spanning segment; it reads LTTWFWVGAVGMLAGTVLPIR. Topologically, residues 24–31 are cytoplasmic; sequence DCIRHPSH. Residues 32–53 traverse the membrane as a helical segment; sequence RRYDLVLAGITGLAAIAYTTMG. Residues 54 to 67 lie on the Extracellular side of the membrane; the sequence is LGITATTVGDRTVY. Residues 68–89 form a helical membrane-spanning segment; that stretch reads LARYIDWLVTTPLIVLYLAMLA. The Cytoplasmic portion of the chain corresponds to 90–92; sequence RPG. A helical transmembrane segment spans residues 93–115; that stretch reads HRTSAWLLAADVFVIAAGIAAAL. Residues 116–119 are Extracellular-facing; sequence TTGV. A helical membrane pass occupies residues 120-147; sequence QRWLFFAVGAAGYAALLYGLLGTLPRAL. Over 148–150 the chain is Cytoplasmic; that stretch reads GDD. The chain crosses the membrane as a helical span at residues 151–178; it reads PRVRSLFVTLRNITVVLWTLYPVVWLLS. The Extracellular segment spans residues 179-186; it reads PAGIGILQ. A helical transmembrane segment spans residues 187-214; the sequence is TEMYTIVVVYLDFISKVAFVAFAVLGAD. K202 bears the N6-(retinylidene)lysine mark. Topologically, residues 215-237 are cytoplasmic; it reads AVSRLVAADAAAPATAEPTPDGD.

This sequence belongs to the archaeal/bacterial/fungal opsin family. As to quaternary structure, interacts with HTR-II.

The protein localises to the cell membrane. In terms of biological role, photophobic photoreceptor responsible for the negative phototaxis. Activates the sensory rhodopsin II transducer (HTR-II) in response to blue light. The sequence is that of Sensory rhodopsin-2 (sop2) from Halobacterium salinarum (strain ATCC 700922 / JCM 11081 / NRC-1) (Halobacterium halobium).